A 155-amino-acid polypeptide reads, in one-letter code: Small ribosomal subunit protein uS17 (155 aa).

N-acetylalanine is present on Ala-2.

This sequence belongs to the universal ribosomal protein uS17 family.

This Drosophila pseudoobscura pseudoobscura (Fruit fly) protein is Small ribosomal subunit protein uS17.